A 296-amino-acid chain; its full sequence is 4-hydroxy-tetrahydrodipicolinate synthase (296 aa).

Thr-47 is a pyruvate binding site. Tyr-135 (proton donor/acceptor) is an active-site residue. Lys-164 serves as the catalytic Schiff-base intermediate with substrate. Ile-207 contacts pyruvate.

It belongs to the DapA family. Homotetramer; dimer of dimers.

The protein localises to the cytoplasm. It carries out the reaction L-aspartate 4-semialdehyde + pyruvate = (2S,4S)-4-hydroxy-2,3,4,5-tetrahydrodipicolinate + H2O + H(+). The protein operates within amino-acid biosynthesis; L-lysine biosynthesis via DAP pathway; (S)-tetrahydrodipicolinate from L-aspartate: step 3/4. Its function is as follows. Catalyzes the condensation of (S)-aspartate-beta-semialdehyde [(S)-ASA] and pyruvate to 4-hydroxy-tetrahydrodipicolinate (HTPA). This is 4-hydroxy-tetrahydrodipicolinate synthase from Karelsulcia muelleri (strain GWSS) (Sulcia muelleri).